The sequence spans 440 residues: Gap junction alpha-8 protein (440 aa).

The stretch at 2–12 (GDWSFLGNILE) is an intramembrane region. At 13–21 (EVNEHSTVI) the chain is on the cytoplasmic side. Residues 22–42 (GRVWLTVLFIFRILILGTAAE) form a helical membrane-spanning segment. At 43 to 71 (FVWGDEQSDFVCNTQQPGCENVCYDEAFP) the chain is on the extracellular side. Cystine bridges form between Cys-54–Cys-201, Cys-61–Cys-195, and Cys-65–Cys-190. Residues 72–92 (ISHIRLWVLQIIFVSTPSLMY) form a helical membrane-spanning segment. Over 93–161 (VGHAVHHVRM…GTLLRTYVCH (69 aa)) the chain is Cytoplasmic. The tract at residues 111 to 143 (AEELCQQSRSNGGERVPIAPDQASIRKSSSSSK) is disordered. A helical transmembrane segment spans residues 162 to 182 (IIFKTLFEVGFIVGHYFLYGF). Topologically, residues 183-210 (RILPLYRCSRWPCPNVVDCFVSRPTEKT) are extracellular. The chain crosses the membrane as a helical span at residues 211 to 231 (IFILFMLSVAFVSLFLNIMEM). The Cytoplasmic portion of the chain corresponds to 232 to 440 (SHLGMKGIRS…SRARSDDLTI (209 aa)). Positions 334–440 (GAQEVEREEQ…SRARSDDLTI (107 aa)) are disordered. Composition is skewed to basic and acidic residues over residues 353 to 364 (VGEKKQEAEKVA) and 375 to 399 (DGEK…EKVT). Residues 423–432 (LSRLSKASSR) show a composition bias toward low complexity.

The protein belongs to the connexin family. Alpha-type (group II) subfamily. As to quaternary structure, a hemichannel or connexon is composed of a hexamer of connexins. A functional gap junction is formed by the apposition of two hemichannels. Forms heteromeric channels with GJA3. As to expression, detected in eye lens (at protein level).

The protein resides in the cell membrane. Its subcellular location is the cell junction. The protein localises to the gap junction. Its function is as follows. Structural component of eye lens gap junctions. Gap junctions are dodecameric channels that connect the cytoplasm of adjoining cells. They are formed by the docking of two hexameric hemichannels, one from each cell membrane. Small molecules and ions diffuse from one cell to a neighboring cell via the central pore. The polypeptide is Gap junction alpha-8 protein (Gja8) (Rattus norvegicus (Rat)).